A 180-amino-acid chain; its full sequence is Nucleoside triphosphate/diphosphate phosphatase (180 aa).

Arg-26 functions as the Proton donor in the catalytic mechanism. Positions 90, 106, 108, 110, 123, and 126 each coordinate Mg(2+).

Belongs to the Ntdp family. Requires Mg(2+) as cofactor.

It carries out the reaction a ribonucleoside 5'-triphosphate + H2O = a ribonucleoside 5'-diphosphate + phosphate + H(+). The catalysed reaction is a ribonucleoside 5'-diphosphate + H2O = a ribonucleoside 5'-phosphate + phosphate + H(+). In terms of biological role, has nucleoside phosphatase activity towards nucleoside triphosphates and nucleoside diphosphates. In Staphylococcus aureus (strain MRSA252), this protein is Nucleoside triphosphate/diphosphate phosphatase.